Consider the following 83-residue polypeptide: Small ribosomal subunit protein uS17 (83 aa).

The protein belongs to the universal ribosomal protein uS17 family. As to quaternary structure, part of the 30S ribosomal subunit.

In terms of biological role, one of the primary rRNA binding proteins, it binds specifically to the 5'-end of 16S ribosomal RNA. The polypeptide is Small ribosomal subunit protein uS17 (Colwellia psychrerythraea (strain 34H / ATCC BAA-681) (Vibrio psychroerythus)).